The following is a 193-amino-acid chain: Putative histone H2B type 2-C (193 aa).

A compositionally biased stretch (low complexity) spans 1-12; the sequence is MPEPAKFAPAPK. Residues 1–33 are disordered; that stretch reads MPEPAKFAPAPKKGSKKAVTKAQKKDGKKRKRS. Pro-2 bears the N-acetylproline mark. Position 6 is an N6-(2-hydroxyisobutyryl)lysine; alternate (Lys-6). Residues Lys-6 and Lys-12 each carry the N6-(beta-hydroxybutyryl)lysine; alternate modification. N6-acetyllysine; alternate occurs at positions 6, 12, and 13. Lys-6 bears the N6-butyryllysine; alternate mark. 3 positions are modified to N6-crotonyllysine; alternate: Lys-6, Lys-12, and Lys-13. An N6-lactoyllysine; alternate mark is found at Lys-6 and Lys-12. Lys-6 participates in a covalent cross-link: Glycyl lysine isopeptide (Lys-Gly) (interchain with G-Cter in SUMO2); alternate. Lys-13 is modified (N6-(2-hydroxyisobutyryl)lysine; alternate). Ser-15 bears the Phosphoserine; by STK4/MST1 mark. An N6-acetyllysine; alternate mark is found at Lys-16, Lys-17, Lys-21, and Lys-24. N6-crotonyllysine; alternate occurs at positions 16, 17, 21, and 24. An N6-lactoyllysine; alternate mark is found at Lys-16, Lys-17, Lys-21, and Lys-24. N6-(beta-hydroxybutyryl)lysine; alternate is present on residues Lys-17 and Lys-21. Position 17 is an N6-glutaryllysine; alternate (Lys-17). N6-(2-hydroxyisobutyryl)lysine; alternate is present on residues Lys-21 and Lys-24. Lys-21 is subject to N6-butyryllysine; alternate. Lys-21 is covalently cross-linked (Glycyl lysine isopeptide (Lys-Gly) (interchain with G-Cter in SUMO2); alternate). Lys-25 bears the N6-(2-hydroxyisobutyryl)lysine mark. The residue at position 35 (Lys-35) is an N6-(2-hydroxyisobutyryl)lysine; alternate. Residue Lys-35 is modified to N6-(beta-hydroxybutyryl)lysine; alternate. The residue at position 35 (Lys-35) is an N6-crotonyllysine; alternate. At Lys-35 the chain carries N6-glutaryllysine; alternate. Lys-35 is modified (N6-succinyllysine; alternate). Lys-35 participates in a covalent cross-link: Glycyl lysine isopeptide (Lys-Gly) (interchain with G-Cter in ubiquitin); alternate. A Phosphoserine; by AMPK modification is found at Ser-37. Lys-44, Lys-47, and Lys-58 each carry N6-(2-hydroxyisobutyryl)lysine; alternate. An N6-lactoyllysine; alternate modification is found at Lys-44. An N6-glutaryllysine; alternate mark is found at Lys-44 and Lys-47. The residue at position 47 (Lys-47) is an N6-methyllysine; alternate. Position 58 is an N6,N6-dimethyllysine; alternate (Lys-58). Residue Arg-80 is modified to Dimethylated arginine. Lys-86 bears the N6-(2-hydroxyisobutyryl)lysine; alternate mark. At Lys-86 the chain carries N6-(beta-hydroxybutyryl)lysine; alternate. Lys-86 bears the N6-acetyllysine; alternate mark. The residue at position 86 (Lys-86) is an N6-lactoyllysine; alternate. An N6,N6,N6-trimethyllysine; alternate modification is found at Lys-86. An omega-N-methylarginine mark is found at Arg-87 and Arg-93. A disordered region spans residues 111 to 136; that stretch reads PCPRAPRRSPSTPAPSESLPGPGARS.

The protein belongs to the histone H2B family. As to quaternary structure, the nucleosome is a histone octamer containing two molecules each of H2A, H2B, H3 and H4 assembled in one H3-H4 heterotetramer and two H2A-H2B heterodimers. The octamer wraps approximately 147 bp of DNA. Phosphorylation at Ser-37 (H2BS36ph) by AMPK in response to stress promotes transcription. Phosphorylated on Ser-15 (H2BS14ph) by STK4/MST1 during apoptosis; which facilitates apoptotic chromatin condensation. Also phosphorylated on Ser-15 in response to DNA double strand breaks (DSBs), and in correlation with somatic hypermutation and immunoglobulin class-switch recombination. In terms of processing, crotonylation (Kcr) is specifically present in male germ cells and marks testis-specific genes in post-meiotic cells, including X-linked genes that escape sex chromosome inactivation in haploid cells. Crotonylation marks active promoters and enhancers and confers resistance to transcriptional repressors. It is also associated with post-meiotically activated genes on autosomes. Post-translationally, lactylated in macrophages by EP300/P300 by using lactoyl-CoA directly derived from endogenous or exogenous lactate, leading to stimulates gene transcription.

It localises to the nucleus. The protein localises to the chromosome. Its function is as follows. Core component of nucleosome. Nucleosomes wrap and compact DNA into chromatin, limiting DNA accessibility to the cellular machineries which require DNA as a template. Histones thereby play a central role in transcription regulation, DNA repair, DNA replication and chromosomal stability. DNA accessibility is regulated via a complex set of post-translational modifications of histones, also called histone code, and nucleosome remodeling. This Homo sapiens (Human) protein is Putative histone H2B type 2-C.